The chain runs to 446 residues: Tryptophan synthase beta chain 2 (446 aa).

The residue at position 110 (Lys110) is an N6-(pyridoxal phosphate)lysine.

The protein belongs to the TrpB family. Tetramer of two alpha and two beta chains. Pyridoxal 5'-phosphate serves as cofactor.

It catalyses the reaction (1S,2R)-1-C-(indol-3-yl)glycerol 3-phosphate + L-serine = D-glyceraldehyde 3-phosphate + L-tryptophan + H2O. The protein operates within amino-acid biosynthesis; L-tryptophan biosynthesis; L-tryptophan from chorismate: step 5/5. In terms of biological role, the beta subunit is responsible for the synthesis of L-tryptophan from indole and L-serine. The chain is Tryptophan synthase beta chain 2 (trpB2) from Pyrococcus furiosus (strain ATCC 43587 / DSM 3638 / JCM 8422 / Vc1).